Consider the following 250-residue polypeptide: tRNA (guanine-N(1)-)-methyltransferase (250 aa).

Residues glycine 116 and 136-141 contribute to the S-adenosyl-L-methionine site; that span reads IGDYVL.

Belongs to the RNA methyltransferase TrmD family. In terms of assembly, homodimer.

It is found in the cytoplasm. It catalyses the reaction guanosine(37) in tRNA + S-adenosyl-L-methionine = N(1)-methylguanosine(37) in tRNA + S-adenosyl-L-homocysteine + H(+). In terms of biological role, specifically methylates guanosine-37 in various tRNAs. This chain is tRNA (guanine-N(1)-)-methyltransferase, found in Pseudomonas putida (strain W619).